We begin with the raw amino-acid sequence, 335 residues long: Dehydration-responsive element-binding protein 2A (335 aa).

2 disordered regions span residues 1–32 (MAVYDQSGDRNRTQIDTSRKRKSRSRGDGTTV) and 50–74 (STKKRKVPAKGSKKGCMKGKGGPEN). The Nuclear localization signal signature appears at 19–55 (RKRKSRSRGDGTTVAERLKRWKEYNETVEEVSTKKRK). Residues 52–66 (KKRKVPAKGSKKGCM) show a composition bias toward basic residues. Positions 78 to 135 (SFRGVRQRIWGKWVAEIREPNRGSRLWLGTFPTAQEAASAYDEAAKAMYGPLARLNFP) form a DNA-binding region, AP2/ERF. The disordered stretch occupies residues 279-304 (QDRYPGNSVANGSYRPESQQSGFDPL). The segment covering 286–304 (SVANGSYRPESQQSGFDPL) has biased composition (polar residues).

Belongs to the AP2/ERF transcription factor family. ERF subfamily. In terms of assembly, interacts with MED25. Binds to DPB3-1 in the nucleus during heat-stress. Ubiquitinated by DRIP1 and DRIP2. Ubiquitination probably leads to its subsequent degradation, thus negatively regulating response to drought. In terms of tissue distribution, expressed preferentially in roots and stems, and at a lower level in leaves.

The protein localises to the nucleus. In terms of biological role, transcriptional activator that binds specifically to the DNA sequence 5'-[AG]CCGAC-3'. Binding to the C-repeat/DRE element mediates high salinity- and dehydration-inducible transcription. Promotes the expression of heat stress-inducible genes by contributing to the formation of a heat stress-specific transcriptional complex with NF-Y subunits (e.g. DPB3-1, NF-YA2 and NF-YB3) at the promoter of target genes, thus promoting heat tolerance. The chain is Dehydration-responsive element-binding protein 2A from Arabidopsis thaliana (Mouse-ear cress).